Here is a 238-residue protein sequence, read N- to C-terminus: MPLKDLPLDAQPREKLLARGPAALSDAELLAILLRTGLAGKGVLQLAQELLDDPVRDPATGRSAGGGFGGIAGLLHASSQDLQRIKGLGPAKRAELMAVLELARRAMAQQLREREVFDSPQAVQHYLQLHLAGRTHEVFAVLFLDSGNRLIAMEELFRGTLTQTSVYPREVVLRALHHHAAAVVLAHNHPSGSVQPSRADEALTQTLKAALALVDVRVLDHVIVAPGAALSMAEQGLV.

The MPN domain occupies 116–238; it reads VFDSPQAVQH…ALSMAEQGLV (123 aa). Zn(2+) is bound by residues H187, H189, and D200. Positions 187–200 match the JAMM motif motif; sequence HNHPSGSVQPSRAD.

This sequence belongs to the UPF0758 family.

The sequence is that of UPF0758 protein Dtpsy_2777 from Acidovorax ebreus (strain TPSY) (Diaphorobacter sp. (strain TPSY)).